Reading from the N-terminus, the 196-residue chain is Cupin-domain-containing oxidoreductase srdB (196 aa).

One can recognise a Cupin type-2 domain in the interval 92-156 (DFAPGCKSNM…TSDEKPARML (65 aa)).

Belongs to the virC family.

Functionally, cupin-domain-containing oxidoreductase; part of the gene cluster that mediates the biosynthesis of sordarial, a salicylic aldehyde structurally related to the phytotoxin pyriculol. The most interesting aspect of this pathway is formation of an aromatic product from the highly reducing polyketide synthase srdA. SrdA synthesizes a reduced polyketide chain from one molecule of acetyl-CoA and five molecules of malonyl-CoA. The polyketide chain is then reductively released as an aldehyde. The oxidoreductases srdC, srdD and srdE then oxidize one of the hydroxy groups to facilitate the intramolecular aldol condensation, followed by dehydration to yield a salicylic aldehyde. This aldehyde can undergo facile reduction by endogenous reductases to yield the alcohol 1-hydroxy-2-hydroxymethyl-3-pent-1,3-dienylbenzene. The flavin-dependent srdI counteract against the propensity of the aldehydes to be reduced under physiological conditions and is responsible for reoxidizing 1-hydroxy-2-hydroxymethyl-3-pent-1,3-dienylbenzene back to the salicylic aldehyde. This salicylic aldehyde is then selectively epoxidized by the cupin-domain-containing oxidoreductase srdB to yield the epoxide, which can be hydrolyzed stereoselectively by the hydrolase srdG to give the final product sordarial. This is Cupin-domain-containing oxidoreductase srdB from Neurospora crassa (strain ATCC 24698 / 74-OR23-1A / CBS 708.71 / DSM 1257 / FGSC 987).